The sequence spans 171 residues: Protein-export protein SecB (171 aa).

The protein belongs to the SecB family. In terms of assembly, homotetramer, a dimer of dimers. One homotetramer interacts with 1 SecA dimer.

The protein resides in the cytoplasm. One of the proteins required for the normal export of preproteins out of the cell cytoplasm. It is a molecular chaperone that binds to a subset of precursor proteins, maintaining them in a translocation-competent state. It also specifically binds to its receptor SecA. This is Protein-export protein SecB from Granulibacter bethesdensis (strain ATCC BAA-1260 / CGDNIH1).